The sequence spans 430 residues: Tol-Pal system protein TolB (430 aa).

A signal peptide spans 1–19 (MKKQIFFTLILLISGLARA).

The protein belongs to the TolB family. As to quaternary structure, the Tol-Pal system is composed of five core proteins: the inner membrane proteins TolA, TolQ and TolR, the periplasmic protein TolB and the outer membrane protein Pal. They form a network linking the inner and outer membranes and the peptidoglycan layer.

It localises to the periplasm. In terms of biological role, part of the Tol-Pal system, which plays a role in outer membrane invagination during cell division and is important for maintaining outer membrane integrity. This Hahella chejuensis (strain KCTC 2396) protein is Tol-Pal system protein TolB.